The sequence spans 226 residues: MRHRGRRSTQHTHVREGIYIKKLIKQINPACRIQVKSVQILTSLIRDTTISIMNEAFHLVQLSNKRTLSARDVQTSVRLCTVGEISRHAVSEGVKRVTNFNSAKQYPPQPPPAKTATPSSPSSIPAPPISHPPIIPHSYLKTKVKQMNYNYRISNSSMHYLSAVIEYLLSEILELSSNGAVSAKRTLIQPRDIFLAIANDIELHSMYGHVIIPGGGTKPLFNSLSF.

The interval 100–130 is disordered; the sequence is FNSAKQYPPQPPPAKTATPSSPSSIPAPPIS. Residues 114 to 123 are compositionally biased toward low complexity; the sequence is KTATPSSPSS.

It belongs to the histone H2B family.

The sequence is that of Histone H2B.v1 (H2Bv1) from Dictyostelium discoideum (Social amoeba).